Consider the following 373-residue polypeptide: Protein phosphatase 1K, mitochondrial (373 aa).

A PPM-type phosphatase domain is found at 95-347 (KVGCSTQLGK…DNSTAIVVPF (253 aa)). The Mg(2+) site is built by Asp128, Gly129, and Asp338.

This sequence belongs to the PP2C family. Mg(2+) is required as a cofactor. Mn(2+) serves as cofactor.

It localises to the mitochondrion matrix. The catalysed reaction is O-phospho-L-seryl-[protein] + H2O = L-seryl-[protein] + phosphate. It catalyses the reaction O-phospho-L-threonyl-[protein] + H2O = L-threonyl-[protein] + phosphate. The chain is Protein phosphatase 1K, mitochondrial (ppm1k) from Xenopus laevis (African clawed frog).